The primary structure comprises 545 residues: Sensory neuron membrane protein 1 (545 aa).

Topologically, residues 1 to 10 (MELKERNFKK) are cytoplasmic. The helical transmembrane segment at 11 to 31 (IGLICVAVLLCGMVFSYGIFP) threads the bilayer. Residues 32 to 464 (SILRFMIKQN…LFLGLKFNAT (433 aa)) lie on the Extracellular side of the membrane. Residues asparagine 69, asparagine 214, and asparagine 227 are each glycosylated (N-linked (GlcNAc...) asparagine). 3 cysteine pairs are disulfide-bonded: cysteine 266–cysteine 331, cysteine 295–cysteine 351, and cysteine 333–cysteine 340. Residues asparagine 444 and asparagine 462 are each glycosylated (N-linked (GlcNAc...) asparagine). Residues 465-485 (VKWLTIIIGTVGAVGSAYMYF) traverse the membrane as a helical segment. Over 486-545 (RKETKTTDVAPVDVSTPDTNPSSAKDGVVNVSLGRNLPPVIDGLDKPPKLRATELQQERY) the chain is Cytoplasmic.

The protein belongs to the CD36 family. In terms of tissue distribution, selectively expressed in antenna.

It localises to the cell membrane. Functionally, plays an olfactory role that is not restricted to pheromone sensitivity. The polypeptide is Sensory neuron membrane protein 1 (snmp1) (Anopheles gambiae (African malaria mosquito)).